A 154-amino-acid chain; its full sequence is Protein X (154 aa).

Residues 68–117 (PCALRFTSARCMETTVNAPRNLPKVLHKRTLGLSTMSTTGIETYFKDCVF) form a mitochondrial targeting sequence region.

This sequence belongs to the orthohepadnavirus protein X family. As to quaternary structure, may form homodimer. May interact with host CEBPA, CFLAR, CREB1, DDB1, E4F1, HBXIP, HSPD1/HSP60, NFKBIA, POLR2E and SMAD4. Interacts with host SMC5-SMC6 complex and induces its degradation. Interacts with host TRPC4AP; leading to prevent ubiquitination of TRPC4AP. Interacts with host PLSCR1; this interaction promotes ubiquitination and degradation of HBx and impairs HBx-mediated cell proliferation. A fraction may be phosphorylated in insect cells and HepG2 cells, a human hepatoblastoma cell line. Phosphorylated in vitro by host protein kinase C or mitogen-activated protein kinase. N-acetylated in insect cells.

It localises to the host cytoplasm. It is found in the host nucleus. Its subcellular location is the host mitochondrion. In terms of biological role, multifunctional protein that plays a role in silencing host antiviral defenses and promoting viral transcription. Does not seem to be essential for HBV infection. May be directly involved in development of cirrhosis and liver cancer (hepatocellular carcinoma). Most of cytosolic activities involve modulation of cytosolic calcium. The effect on apoptosis is controversial depending on the cell types in which the studies have been conducted. May induce apoptosis by localizing in mitochondria and causing loss of mitochondrial membrane potential. May also modulate apoptosis by binding host CFLAR, a key regulator of the death-inducing signaling complex (DISC). Promotes viral transcription by using the host E3 ubiquitin ligase DDB1 to target the SMC5-SMC6 complex to proteasomal degradation. This host complex would otherwise bind to viral episomal DNA, and prevents its transcription. Moderately stimulates transcription of many different viral and cellular transcription elements. Promoters and enhancers stimulated by HBx contain DNA binding sites for NF-kappa-B, AP-1, AP-2, c-EBP, ATF/CREB, or the calcium-activated factor NF-AT. The protein is Protein X of Orangutan hepatitis B virus (isolate Somad) (HBVoru).